A 707-amino-acid chain; its full sequence is U-box domain-containing protein 2 (707 aa).

The U-box domain occupies 239 to 313; sequence RVPSDFRCSL…ASWCETNNVY (75 aa). ARM repeat units lie at residues 453-492, 494-534, 536-575, 577-615, and 617-656; these read TDNR…NLSI, DNNK…SLSV, EEYK…NLSI, HENK…NLAT, and REGK…QLCT.

The enzyme catalyses S-ubiquitinyl-[E2 ubiquitin-conjugating enzyme]-L-cysteine + [acceptor protein]-L-lysine = [E2 ubiquitin-conjugating enzyme]-L-cysteine + N(6)-ubiquitinyl-[acceptor protein]-L-lysine.. It functions in the pathway protein modification; protein ubiquitination. Its function is as follows. Functions as an E3 ubiquitin ligase. The chain is U-box domain-containing protein 2 (PUB2) from Arabidopsis thaliana (Mouse-ear cress).